Consider the following 1697-residue polypeptide: Phosphatidylinositol 3-kinase 3 (1697 aa).

Disordered stretches follow at residues 57–91 (RSINNNNNNNNNNNNNNNNNNNNNNNNNNNNTQPC), 169–229 (INNN…DSSI), 244–279 (KTTETKETSTGTSPLEKSPSKGFIISPKKPEEENEI), 310–376 (KKNN…NSVG), 398–428 (SWTSSKPTSSSIGFASSPQNNGKPLNISGSS), and 440–504 (DLLK…NNDE). Low complexity-rich tracts occupy residues 60–87 (NNNNNNNNNNNNNNNNNNNNNNNNNNNN), 170–196 (NNNNNNNNNNNNNNNNNNNNNNNNNNN), and 212–222 (NNNSNNNNNIN). 2 stretches are compositionally biased toward low complexity: residues 312–374 (NNNN…TTNS) and 398–408 (SWTSSKPTSSS). 2 stretches are compositionally biased toward polar residues: residues 409–428 (IGFASSPQNNGKPLNISGSS) and 444–456 (SPSSSPPTQSDIF). Positions 457–503 (NENNNNNNNNNNNNNNNNNNNNNNNNNNNNNNNNEELINNNNNNNND) are enriched in low complexity. Residues 737 to 823 (PEFFVIRVHL…KGEIDLTMVE (87 aa)) form the PI3K-RBD domain. Residues 888–1036 (VTENLQVRLL…QAIIIAFEFK (149 aa)) form the C2 PI3K-type domain. A PIK helical domain is found at 1060–1238 (GNELPVVTME…RVLSSGFLRY (179 aa)). A PI3K/PI4K catalytic domain is found at 1304–1581 (IPEKCKSMDS…LIHESIGTLT (278 aa)). The segment at 1310–1316 (SMDSAKV) is G-loop. The catalytic loop stretch occupies residues 1447–1455 (GIGDRHNDN). The segment at 1466–1492 (HIDFGHFLGNFKTFAGFQREKAPFVLT) is activation loop. Residues 1609–1625 (ASSLNLNKNKPSSQSKL) are compositionally biased toward low complexity. The interval 1609–1697 (ASSLNLNKNK…DTEKENSIDK (89 aa)) is disordered. 5 tandem repeats follow at residues 1622–1626 (QSKLD), 1627–1631 (LSRSD), 1632–1636 (LSRSD), 1642–1646 (SSRLD), and 1647–1651 (LSRSD). A 5 X 5 AA approximate repeats region spans residues 1622–1651 (QSKLDLSRSDLSRSDSSRSDSSRLDLSRSD). 2 stretches are compositionally biased toward basic and acidic residues: residues 1626–1681 (DLSR…DKDN) and 1688–1697 (DTEKENSIDK). The tract at residues 1659–1672 (KEKEKEKEKEKEKE) is 7 X 2 AA tandem repeats of K-E.

The protein belongs to the PI3/PI4-kinase family.

The catalysed reaction is a 1,2-diacyl-sn-glycero-3-phospho-(1D-myo-inositol) + ATP = a 1,2-diacyl-sn-glycero-3-phospho-(1D-myo-inositol-3-phosphate) + ADP + H(+). The chain is Phosphatidylinositol 3-kinase 3 (pikC) from Dictyostelium discoideum (Social amoeba).